Here is a 543-residue protein sequence, read N- to C-terminus: MAKDIKFSADARAAMVRGVDMLADTVKVTLGPKGRNVVLEKAFGSPLITNDGVTIAKEIELEDHFENMGAKLVSEVASKTNDIAGDGTTTATVLTQAIVHEGLKNVTAGANPIGIRRGIETATATAVEALKAIAQPVSGKEAIAQVAAVSSRSEKVGEYISEAMERVGNDGVITIEESRGMETELEVVEGMQFDRGYLSQYMVTDNEKMVADLENPFILITDKKVSNIQDILPLLEEVLKTNRPLLIIADDVDGEALPTLVLNKIRGTFNVVAVKAPGFGDRRKAMLEDIAILTGGTVITEDLGLELKDATMTALGQAAKITVDKDSTVIVEGSGSSEAIANRIALIKSQLETTTSDFDREKLQERLAKLAGGVAVIKVGAPTETALKEMKLRIEDALNATRAAVEEGIVAGGGTALITVIEKVAALELEGDDATGRNIVLRALEEPVRQIALNAGYEGSVVIDKLKNSPAGTGFNAATGEWVDMIKTGIIDPVKVTRSALQNAASVASLILTTEAVVANKPEPATPAPAMPAGMDPGMMGGF.

Residues 29–32, 86–90, Gly413, 476–478, and Asp492 contribute to the ATP site; these read TLGP, DGTTT, and NAA.

This sequence belongs to the chaperonin (HSP60) family. Forms a cylinder of 14 subunits composed of two heptameric rings stacked back-to-back. Interacts with the co-chaperonin GroES.

It is found in the cytoplasm. The enzyme catalyses ATP + H2O + a folded polypeptide = ADP + phosphate + an unfolded polypeptide.. In terms of biological role, together with its co-chaperonin GroES, plays an essential role in assisting protein folding. The GroEL-GroES system forms a nano-cage that allows encapsulation of the non-native substrate proteins and provides a physical environment optimized to promote and accelerate protein folding. The protein is Chaperonin GroEL of Streptococcus pyogenes serotype M1.